We begin with the raw amino-acid sequence, 378 residues long: Succinate--CoA ligase [GDP-forming] subunit beta (378 aa).

The region spanning 9 to 235 (KEILARYGVP…VEAEHPLEVE (227 aa)) is the ATP-grasp domain. GTP contacts are provided by residues Lys45, 52 to 54 (GRG), Val94, and Glu99. The Mg(2+) site is built by Asn190 and Asp204. Residues Asn255 and 312–314 (GIT) each bind substrate.

The protein belongs to the succinate/malate CoA ligase beta subunit family. In terms of assembly, heterotetramer of two alpha and two beta subunits. The cofactor is Mg(2+).

It carries out the reaction GTP + succinate + CoA = succinyl-CoA + GDP + phosphate. The enzyme catalyses succinate + ATP + CoA = succinyl-CoA + ADP + phosphate. It participates in carbohydrate metabolism; tricarboxylic acid cycle; succinate from succinyl-CoA (ligase route): step 1/1. Functionally, succinyl-CoA synthetase functions in the citric acid cycle (TCA), coupling the hydrolysis of succinyl-CoA to the synthesis of either ATP or GTP and thus represents the only step of substrate-level phosphorylation in the TCA. The beta subunit provides nucleotide specificity of the enzyme and binds the substrate succinate, while the binding sites for coenzyme A and phosphate are found in the alpha subunit. Can use either ATP or GTP, but prefers GTP. This chain is Succinate--CoA ligase [GDP-forming] subunit beta, found in Thermus thermophilus.